We begin with the raw amino-acid sequence, 155 residues long: Transcription antitermination protein NusB (155 aa).

This sequence belongs to the NusB family.

In terms of biological role, involved in transcription antitermination. Required for transcription of ribosomal RNA (rRNA) genes. Binds specifically to the boxA antiterminator sequence of the ribosomal RNA (rrn) operons. The sequence is that of Transcription antitermination protein NusB from Mesorhizobium japonicum (strain LMG 29417 / CECT 9101 / MAFF 303099) (Mesorhizobium loti (strain MAFF 303099)).